Consider the following 350-residue polypeptide: Phenylalanine--tRNA ligase alpha subunit (350 aa).

Residue Glu-271 participates in Mg(2+) binding.

The protein belongs to the class-II aminoacyl-tRNA synthetase family. Phe-tRNA synthetase alpha subunit type 1 subfamily. As to quaternary structure, tetramer of two alpha and two beta subunits. The cofactor is Mg(2+).

The protein resides in the cytoplasm. The catalysed reaction is tRNA(Phe) + L-phenylalanine + ATP = L-phenylalanyl-tRNA(Phe) + AMP + diphosphate + H(+). The protein is Phenylalanine--tRNA ligase alpha subunit of Delftia acidovorans (strain DSM 14801 / SPH-1).